Here is a 192-residue protein sequence, read N- to C-terminus: Xanthine phosphoribosyltransferase (192 aa).

Positions 20 and 26 each coordinate xanthine. 127–131 (ANGQA) is a 5-phospho-alpha-D-ribose 1-diphosphate binding site. Residue lysine 155 participates in xanthine binding.

It belongs to the purine/pyrimidine phosphoribosyltransferase family. Xpt subfamily. Homodimer.

It localises to the cytoplasm. The enzyme catalyses XMP + diphosphate = xanthine + 5-phospho-alpha-D-ribose 1-diphosphate. It functions in the pathway purine metabolism; XMP biosynthesis via salvage pathway; XMP from xanthine: step 1/1. Converts the preformed base xanthine, a product of nucleic acid breakdown, to xanthosine 5'-monophosphate (XMP), so it can be reused for RNA or DNA synthesis. This Streptococcus thermophilus protein is Xanthine phosphoribosyltransferase.